Here is a 159-residue protein sequence, read N- to C-terminus: SsrA-binding protein (159 aa).

This sequence belongs to the SmpB family.

The protein localises to the cytoplasm. Its function is as follows. Required for rescue of stalled ribosomes mediated by trans-translation. Binds to transfer-messenger RNA (tmRNA), required for stable association of tmRNA with ribosomes. tmRNA and SmpB together mimic tRNA shape, replacing the anticodon stem-loop with SmpB. tmRNA is encoded by the ssrA gene; the 2 termini fold to resemble tRNA(Ala) and it encodes a 'tag peptide', a short internal open reading frame. During trans-translation Ala-aminoacylated tmRNA acts like a tRNA, entering the A-site of stalled ribosomes, displacing the stalled mRNA. The ribosome then switches to translate the ORF on the tmRNA; the nascent peptide is terminated with the 'tag peptide' encoded by the tmRNA and targeted for degradation. The ribosome is freed to recommence translation, which seems to be the essential function of trans-translation. The sequence is that of SsrA-binding protein from Acidothermus cellulolyticus (strain ATCC 43068 / DSM 8971 / 11B).